Reading from the N-terminus, the 79-residue chain is Putative antitoxin VapB12 (79 aa).

This sequence belongs to the UPF0330 family.

Possibly the antitoxin component of a type II toxin-antitoxin (TA) system. Its cognate toxin is VapC12 (Potential). The sequence is that of Putative antitoxin VapB12 (vapB12) from Sulfurisphaera tokodaii (strain DSM 16993 / JCM 10545 / NBRC 100140 / 7) (Sulfolobus tokodaii).